Consider the following 440-residue polypeptide: Putative F-box/LRR-repeat protein At5g15620 (440 aa).

Residues 1–52 (MDRFSNLPDDVIYHIVSFLSAKEATCLKFVSKNFQNLVTIKRNVVFHHWESF) enclose the F-box domain. 7 LRR repeats span residues 4-31 (FSNL…KFVS), 126-153 (LKLG…ILDS), 156-181 (FYAS…VIDR), 194-205 (SSPTLKRLTLRR), 210-235 (PEPE…KYKD), 264-289 (YWLN…SIKV), and 318-343 (EADF…TIEG).

The polypeptide is Putative F-box/LRR-repeat protein At5g15620 (Arabidopsis thaliana (Mouse-ear cress)).